We begin with the raw amino-acid sequence, 346 residues long: Putative toluene-4-sulfonate monooxygenase system iron-sulfur subunit TsaM2 (346 aa).

Residues 7–108 form the Rieske domain; that stretch reads WYVAGMATDC…LVERHGLLWI (102 aa). Positions 47, 49, 66, and 69 each coordinate [2Fe-2S] cluster.

Homotetramer. Part of the p-toluenesulfonate methyl-monooxygenase complex TsaBM, comprising the reductase TsaB and the oxygenase TsaM. Requires [2Fe-2S] cluster as cofactor.

The catalysed reaction is toluene-4-sulfonate + NADH + O2 + H(+) = 4-(hydroxymethyl)benzenesulfonate + NAD(+) + H2O. In terms of biological role, involved in the toluene-4-sulfonate degradation pathway. Does not discriminate between the sulfonate and the carboxyl substituents and can also be involved in the p-toluenecarboxylate degradation pathway. In Comamonas testosteroni (Pseudomonas testosteroni), this protein is Putative toluene-4-sulfonate monooxygenase system iron-sulfur subunit TsaM2 (tsaM2).